Reading from the N-terminus, the 689-residue chain is Homoaconitase, mitochondrial (689 aa).

The transit peptide at 1 to 17 (MVVLRRSFHVYTRLQRG) directs the protein to the mitochondrion. 3 residues coordinate [4Fe-4S] cluster: Cys-336, Cys-403, and Cys-406.

The protein belongs to the aconitase/IPM isomerase family. It depends on [4Fe-4S] cluster as a cofactor.

The protein localises to the mitochondrion. It catalyses the reaction (2R,3S)-homoisocitrate = cis-homoaconitate + H2O. It participates in amino-acid biosynthesis; L-lysine biosynthesis via AAA pathway; L-alpha-aminoadipate from 2-oxoglutarate: step 3/5. In terms of biological role, catalyzes the reversible hydration of cis-homoaconitate to (2R,3S)-homoisocitrate, a step in the alpha-aminoadipate pathway for lysine biosynthesis. The sequence is that of Homoaconitase, mitochondrial (LYS4) from Candida glabrata (strain ATCC 2001 / BCRC 20586 / JCM 3761 / NBRC 0622 / NRRL Y-65 / CBS 138) (Yeast).